Here is a 121-residue protein sequence, read N- to C-terminus: Ribonuclease P protein component (121 aa).

The protein belongs to the RnpA family. As to quaternary structure, consists of a catalytic RNA component (M1 or rnpB) and a protein subunit.

It catalyses the reaction Endonucleolytic cleavage of RNA, removing 5'-extranucleotides from tRNA precursor.. RNaseP catalyzes the removal of the 5'-leader sequence from pre-tRNA to produce the mature 5'-terminus. It can also cleave other RNA substrates such as 4.5S RNA. The protein component plays an auxiliary but essential role in vivo by binding to the 5'-leader sequence and broadening the substrate specificity of the ribozyme. The sequence is that of Ribonuclease P protein component from Bifidobacterium adolescentis (strain ATCC 15703 / DSM 20083 / NCTC 11814 / E194a).